The primary structure comprises 262 residues: Ninja-family protein 2 (262 aa).

Residues 49–70 (RNSLACNTSKEAAGQSPKEMNA) are disordered.

The protein belongs to the Ninja family.

It is found in the nucleus. This Zea mays (Maize) protein is Ninja-family protein 2.